The following is a 407-amino-acid chain: Cation efflux system protein CusB (407 aa).

The signal sequence occupies residues Met1–Ala28.

Belongs to the membrane fusion protein (MFP) (TC 8.A.1) family. As to quaternary structure, the cus efflux system is composed of CusA, CusB, CusC and CusF.

In terms of biological role, part of a cation efflux system that mediates resistance to copper and silver. The sequence is that of Cation efflux system protein CusB (cusB) from Escherichia coli (strain K12).